The sequence spans 115 residues: Meiotically up-regulated gene 168 protein (115 aa).

Residues 82–115 (SVSPVHTKAEEPGLGLTPMNSADFSNKIASRYRS) are disordered. A compositionally biased stretch (polar residues) spans 99–109 (PMNSADFSNKI).

Its subcellular location is the nucleus. In terms of biological role, has a role in meiosis. In Schizosaccharomyces pombe (strain 972 / ATCC 24843) (Fission yeast), this protein is Meiotically up-regulated gene 168 protein (mug168).